The primary structure comprises 302 residues: UDP-N-acetylenolpyruvoylglucosamine reductase (302 aa).

Residues 27–192 (KVGGAVDYLA…LSAKFALRPG (166 aa)) enclose the FAD-binding PCMH-type domain. Residue Arg-171 is part of the active site. Ser-221 serves as the catalytic Proton donor. Glu-291 is an active-site residue.

The protein belongs to the MurB family. FAD serves as cofactor.

It localises to the cytoplasm. The enzyme catalyses UDP-N-acetyl-alpha-D-muramate + NADP(+) = UDP-N-acetyl-3-O-(1-carboxyvinyl)-alpha-D-glucosamine + NADPH + H(+). It participates in cell wall biogenesis; peptidoglycan biosynthesis. Its function is as follows. Cell wall formation. The polypeptide is UDP-N-acetylenolpyruvoylglucosamine reductase (Streptococcus suis (strain 98HAH33)).